The following is a 556-amino-acid chain: Potassium-transporting ATPase potassium-binding subunit (556 aa).

The next 10 membrane-spanning stretches (helical) occupy residues 6-26, 65-85, 133-153, 176-196, 249-269, 283-303, 378-398, 415-435, 483-503, and 526-546; these read AGIA…VPLG, SVLA…LVQG, GLAV…IALV, LRIL…GGAI, PTPW…FSLP, VAIA…TMLL, GLYG…LMVG, LAAS…AIAM, ALGL…LALA, and FVGM…LPIL.

The protein belongs to the KdpA family. As to quaternary structure, the system is composed of three essential subunits: KdpA, KdpB and KdpC.

The protein resides in the cell membrane. Functionally, part of the high-affinity ATP-driven potassium transport (or Kdp) system, which catalyzes the hydrolysis of ATP coupled with the electrogenic transport of potassium into the cytoplasm. This subunit binds the extracellular potassium ions and delivers the ions to the membrane domain of KdpB through an intramembrane tunnel. This is Potassium-transporting ATPase potassium-binding subunit from Mycolicibacterium smegmatis (strain ATCC 700084 / mc(2)155) (Mycobacterium smegmatis).